Here is an 88-residue protein sequence, read N- to C-terminus: Small ribosomal subunit protein uS15 (88 aa).

The protein belongs to the universal ribosomal protein uS15 family. In terms of assembly, part of the 30S ribosomal subunit. Forms a bridge to the 50S subunit in the 70S ribosome, contacting the 23S rRNA.

Functionally, one of the primary rRNA binding proteins, it binds directly to 16S rRNA where it helps nucleate assembly of the platform of the 30S subunit by binding and bridging several RNA helices of the 16S rRNA. Its function is as follows. Forms an intersubunit bridge (bridge B4) with the 23S rRNA of the 50S subunit in the ribosome. The chain is Small ribosomal subunit protein uS15 from Caldanaerobacter subterraneus subsp. tengcongensis (strain DSM 15242 / JCM 11007 / NBRC 100824 / MB4) (Thermoanaerobacter tengcongensis).